Here is a 907-residue protein sequence, read N- to C-terminus: Valine--tRNA ligase (907 aa).

Residues 45–55 carry the 'HIGH' region motif; sequence PNVTGSLHMGH. The short motif at 554–558 is the 'KMSKS' region element; it reads KMSKS. Lys-557 contributes to the ATP binding site. Positions 838-870 form a coiled coil; it reads GQLIDLEAERARLVKNVSKIEQDIEKISVKLNN.

Belongs to the class-I aminoacyl-tRNA synthetase family. ValS type 1 subfamily. As to quaternary structure, monomer.

The protein localises to the cytoplasm. The catalysed reaction is tRNA(Val) + L-valine + ATP = L-valyl-tRNA(Val) + AMP + diphosphate. Functionally, catalyzes the attachment of valine to tRNA(Val). As ValRS can inadvertently accommodate and process structurally similar amino acids such as threonine, to avoid such errors, it has a 'posttransfer' editing activity that hydrolyzes mischarged Thr-tRNA(Val) in a tRNA-dependent manner. The polypeptide is Valine--tRNA ligase (Bartonella quintana (strain Toulouse) (Rochalimaea quintana)).